We begin with the raw amino-acid sequence, 356 residues long: Guanine nucleotide-binding protein alpha-15 subunit (356 aa).

Residue glycine 2 is the site of N-myristoyl glycine attachment. Cysteine 5 carries S-palmitoyl cysteine lipidation. Residues 33-356 (GNQKLLLLGT…GRNLRGTGME (324 aa)) enclose the G-alpha domain. Residues 36–49 (KLLLLGTGECGKST) form a G1 motif region. GTP is bound by residues 41-48 (GTGECGKS), 177-183 (LRIRIPT), 202-206 (DVGGQ), 271-274 (NKRD), and alanine 328. Positions 48 and 183 each coordinate Mg(2+). The interval 175–183 (DMLRIRIPT) is G2 motif. The interval 198–207 (FRIYDVGGQR) is G3 motif. The G4 motif stretch occupies residues 267–274 (ILFLNKRD). The segment at 326 to 331 (TCATDT) is G5 motif.

This sequence belongs to the G-alpha family. As to quaternary structure, g proteins are composed of 3 units; alpha, beta and gamma. The alpha chain contains the guanine nucleotide binding site.

In terms of biological role, guanine nucleotide-binding proteins (G proteins) are involved as modulators or transducers in various transmembrane signaling systems. This chain is Guanine nucleotide-binding protein alpha-15 subunit (gpa-15), found in Caenorhabditis elegans.